The following is a 424-amino-acid chain: Tyrosine--tRNA ligase (424 aa).

Position 37 (tyrosine 37) interacts with L-tyrosine. The 'HIGH' region motif lies at 42–51; sequence PTADSLHLGH. Tyrosine 175 and glutamine 179 together coordinate L-tyrosine. The 'KMSKS' region motif lies at 235-239; it reads KFGKT. Residue lysine 238 participates in ATP binding. Residues 357 to 414 form the S4 RNA-binding domain; that stretch reads ADLQQALVNAELVPSRGQARTMIGSNAVAINGEKQADPEYVFTDADRLFGRYTLLRRG.

Belongs to the class-I aminoacyl-tRNA synthetase family. TyrS type 1 subfamily. As to quaternary structure, homodimer.

The protein localises to the cytoplasm. The enzyme catalyses tRNA(Tyr) + L-tyrosine + ATP = L-tyrosyl-tRNA(Tyr) + AMP + diphosphate + H(+). In terms of biological role, catalyzes the attachment of tyrosine to tRNA(Tyr) in a two-step reaction: tyrosine is first activated by ATP to form Tyr-AMP and then transferred to the acceptor end of tRNA(Tyr). This is Tyrosine--tRNA ligase from Yersinia pestis bv. Antiqua (strain Antiqua).